The following is a 312-amino-acid chain: Ribonuclease Z (312 aa).

Zn(2+) contacts are provided by His-63, His-65, Asp-67, His-68, His-140, Asp-211, and His-269. The active-site Proton acceptor is the Asp-67.

Belongs to the RNase Z family. In terms of assembly, homodimer. It depends on Zn(2+) as a cofactor.

The catalysed reaction is Endonucleolytic cleavage of RNA, removing extra 3' nucleotides from tRNA precursor, generating 3' termini of tRNAs. A 3'-hydroxy group is left at the tRNA terminus and a 5'-phosphoryl group is left at the trailer molecule.. Zinc phosphodiesterase, which displays some tRNA 3'-processing endonuclease activity. Probably involved in tRNA maturation, by removing a 3'-trailer from precursor tRNA. This is Ribonuclease Z from Anoxybacillus flavithermus (strain DSM 21510 / WK1).